A 439-amino-acid polypeptide reads, in one-letter code: Tol-Pal system protein TolB (439 aa).

An N-terminal signal peptide occupies residues 1 to 22; sequence MKKPLRWLAALTVLLLPLSALA.

This sequence belongs to the TolB family. The Tol-Pal system is composed of five core proteins: the inner membrane proteins TolA, TolQ and TolR, the periplasmic protein TolB and the outer membrane protein Pal. They form a network linking the inner and outer membranes and the peptidoglycan layer.

The protein localises to the periplasm. Part of the Tol-Pal system, which plays a role in outer membrane invagination during cell division and is important for maintaining outer membrane integrity. The sequence is that of Tol-Pal system protein TolB from Xanthomonas oryzae pv. oryzae (strain MAFF 311018).